The chain runs to 104 residues: MSAIQGIEGVISQLQATAMSARAQDSLPQPTISFAGQLHAALDRISDTQTAARTQAEKFTLGEPGVALNDVMTDMQKASVSMQMGIQVRNKLVAAYQEVMSMQV.

The protein belongs to the FliE family.

The protein resides in the bacterial flagellum basal body. The chain is Flagellar hook-basal body complex protein FliE from Escherichia coli (strain SE11).